Here is a 370-residue protein sequence, read N- to C-terminus: Cytochrome b (370 aa).

The next 4 helical transmembrane spans lie at 25–45 (FGSM…FLAV), 69–90 (WLMQ…YIHI), 105–125 (WLSG…GYVL), and 170–190 (FFAL…LHIL). The heme b site is built by His75 and His89. 2 residues coordinate heme b: His174 and His188. His193 contributes to the a ubiquinone binding site. The next 4 helical transmembrane spans lie at 218–238 (YKDL…VSFF), 280–300 (LGGA…PFTH), 312–332 (LMQL…WSST), and 339–358 (FTTI…ISKP).

Belongs to the cytochrome b family. The cytochrome bc1 complex contains 3 respiratory subunits (MT-CYB, CYC1 and UQCRFS1), 2 core proteins (UQCRC1 and UQCRC2) and probably 6 low-molecular weight proteins. Heme b serves as cofactor.

It is found in the mitochondrion inner membrane. In terms of biological role, component of the ubiquinol-cytochrome c reductase complex (complex III or cytochrome b-c1 complex) that is part of the mitochondrial respiratory chain. The b-c1 complex mediates electron transfer from ubiquinol to cytochrome c. Contributes to the generation of a proton gradient across the mitochondrial membrane that is then used for ATP synthesis. This is Cytochrome b (MT-CYB) from Chilabothrus subflavus (Jamaican yellow boa).